The following is a 523-amino-acid chain: Probable methylmalonate-semialdehyde/malonate-semialdehyde dehydrogenase [acylating], mitochondrial (523 aa).

The transit peptide at 1 to 22 directs the protein to the mitochondrion; the sequence is MLSRLARVQPKCQQLAHFSTSK. Residues Phe175, Lys199, and Glu202 each contribute to the NAD(+) site. Cys307 acts as the Nucleophile in catalysis. An NAD(+)-binding site is contributed by Glu407.

The protein belongs to the aldehyde dehydrogenase family. In terms of assembly, homodimer.

Its subcellular location is the mitochondrion. The enzyme catalyses 2-methyl-3-oxopropanoate + NAD(+) + CoA + H2O = propanoyl-CoA + hydrogencarbonate + NADH + H(+). The catalysed reaction is 3-oxopropanoate + NAD(+) + CoA + H2O = hydrogencarbonate + acetyl-CoA + NADH + H(+). Its function is as follows. Probable malonate and methylmalonate semialdehyde dehydrogenase involved in the catabolism of valine, thymine, and compounds catabolized by way of beta-alanine, including uracil and cytidine. The chain is Probable methylmalonate-semialdehyde/malonate-semialdehyde dehydrogenase [acylating], mitochondrial (alh-8) from Caenorhabditis elegans.